Reading from the N-terminus, the 202-residue chain is MNNLSKILSGALVLSLSFNGIWAYNTTKEFDKKDKKYRVTVSEKEKQIGDLKVKLEQKDKKINEGGAGENKKEGNSTLDLQNKYREVANQFVHAYLDYSVQNKGERRNNLLKITDKKVVDIVAPNTDDLGDPNFKSHVNKAAIYINSEGDVSKKCTALLDIEYTIEGLENKQTTINSVVKITLEKQGEEIKVVEYNPYPVKR.

This is an uncharacterized protein from Bacillus anthracis.